The chain runs to 178 residues: Bifunctional protein PyrR (178 aa).

A PRPP-binding motif is present at residues 99 to 111 (VILVDDVLFTGRT).

Belongs to the purine/pyrimidine phosphoribosyltransferase family. PyrR subfamily. Homodimer and homohexamer; in equilibrium.

It carries out the reaction UMP + diphosphate = 5-phospho-alpha-D-ribose 1-diphosphate + uracil. In terms of biological role, regulates transcriptional attenuation of the pyrimidine nucleotide (pyr) operon by binding in a uridine-dependent manner to specific sites on pyr mRNA. This disrupts an antiterminator hairpin in the RNA and favors formation of a downstream transcription terminator, leading to a reduced expression of downstream genes. Its function is as follows. Also displays a weak uracil phosphoribosyltransferase activity which is not physiologically significant. The sequence is that of Bifunctional protein PyrR from Ligilactobacillus salivarius (strain UCC118) (Lactobacillus salivarius).